A 142-amino-acid chain; its full sequence is Malate dehydrogenase, mitochondrial (142 aa).

NAD(+) is bound by residues 1 to 6 (ASGGIG) and D26. Positions 73 and 79 each coordinate substrate. NAD(+) contacts are provided by residues N86 and 109 to 111 (ITN). N111 lines the substrate pocket.

This sequence belongs to the LDH/MDH superfamily. MDH type 1 family. In terms of assembly, homodimer.

The protein localises to the mitochondrion matrix. The catalysed reaction is (S)-malate + NAD(+) = oxaloacetate + NADH + H(+). This Schistosoma mansoni (Blood fluke) protein is Malate dehydrogenase, mitochondrial.